The following is a 222-amino-acid chain: 7-cyano-7-deazaguanine synthase (222 aa).

Position 9 to 19 (9 to 19 (LSGGLDSATAA)) interacts with ATP. Residues cysteine 190, cysteine 198, cysteine 201, and cysteine 204 each contribute to the Zn(2+) site.

This sequence belongs to the QueC family. The cofactor is Zn(2+).

It carries out the reaction 7-carboxy-7-deazaguanine + NH4(+) + ATP = 7-cyano-7-deazaguanine + ADP + phosphate + H2O + H(+). It participates in purine metabolism; 7-cyano-7-deazaguanine biosynthesis. In terms of biological role, catalyzes the ATP-dependent conversion of 7-carboxy-7-deazaguanine (CDG) to 7-cyano-7-deazaguanine (preQ(0)). This chain is 7-cyano-7-deazaguanine synthase, found in Synechococcus sp. (strain RCC307).